The following is a 348-amino-acid chain: Abnormal cell lineage protein 44 (348 aa).

The first 25 residues, 1–25 (MRAAPFDFFFQSTALSTFFILCSLA), serve as a signal peptide directing secretion. Cystine bridges form between Cys-91/Cys-102, Cys-141/Cys-149, Cys-151/Cys-165, Cys-213/Cys-227, Cys-215/Cys-222, Cys-272/Cys-299, Cys-282/Cys-294, Cys-298/Cys-338, Cys-314/Cys-329, Cys-316/Cys-326, and Cys-321/Cys-322. Ser-219 is lipidated: O-palmitoleoyl serine; by mom-1. N-linked (GlcNAc...) asparagine glycosylation is present at Asn-286.

This sequence belongs to the Wnt family. In terms of processing, palmitoleoylation is required for efficient binding to frizzled receptors. Depalmitoleoylation leads to Wnt signaling pathway inhibition. Expressed in the tail hypodermis.

It is found in the secreted. Its subcellular location is the extracellular space. The protein resides in the extracellular matrix. Functionally, ligand for members of the frizzled family of seven transmembrane receptors. Affects male tail development, vulval precursor cell specification and egg laying. Involved in morphogenesis by influencing polarity of asymmetric cell divisions of the B, U, and F cells in the male, and the T cell in males and hermaphrodites. Controls spindle orientation in B-gamma cell division during male copulatory spicule development. Involved in specification of the P7.p lineage during vulval development. Has a role in providing polarity and default lin-17 localization in axon development and positioning of neuromuscular synapses in DA9 regions by negatively regulating synaptogenesis. Plays a role in motorneuron development by promoting the extension of the anterior neurite of ventral D-type GABAergic motorneurons along the anterior-posterior axis of the ventral nerve cord. Positively regulates cilium position and dendrite morphogenesis in postembryonic PQR gas-sensing neurons. This is likely through regulating the localization of grdn-1 to the distal dendrites of PQR sensory neurons. This chain is Abnormal cell lineage protein 44, found in Caenorhabditis elegans.